Here is a 415-residue protein sequence, read N- to C-terminus: Serine hydroxymethyltransferase (415 aa).

(6S)-5,6,7,8-tetrahydrofolate contacts are provided by residues Leu115 and 119–121 (GHL). The residue at position 224 (Lys224) is an N6-(pyridoxal phosphate)lysine. A (6S)-5,6,7,8-tetrahydrofolate-binding site is contributed by 348–350 (SPF).

Belongs to the SHMT family. As to quaternary structure, homodimer. It depends on pyridoxal 5'-phosphate as a cofactor.

The protein resides in the cytoplasm. The enzyme catalyses (6R)-5,10-methylene-5,6,7,8-tetrahydrofolate + glycine + H2O = (6S)-5,6,7,8-tetrahydrofolate + L-serine. The protein operates within one-carbon metabolism; tetrahydrofolate interconversion. It participates in amino-acid biosynthesis; glycine biosynthesis; glycine from L-serine: step 1/1. Its function is as follows. Catalyzes the reversible interconversion of serine and glycine with tetrahydrofolate (THF) serving as the one-carbon carrier. This reaction serves as the major source of one-carbon groups required for the biosynthesis of purines, thymidylate, methionine, and other important biomolecules. Also exhibits THF-independent aldolase activity toward beta-hydroxyamino acids, producing glycine and aldehydes, via a retro-aldol mechanism. The chain is Serine hydroxymethyltransferase from Latilactobacillus sakei subsp. sakei (strain 23K) (Lactobacillus sakei subsp. sakei).